The sequence spans 403 residues: MSKFNRMHLIVLDSVGIGAAPDANNFVNAGVPDGASDTLGHISKTVGLNVPNMAKLGLGNIPREQPLKTVPAESNPTGYATKLEEVSLGKDTMTGHWEIMGLNITEPFDTFWNGFPEEILTQIEEFSGRKVIRESNRPYSGTAVIDDFGPRQMETGELIIYTSADPVLQIAAHEDIIPVEELYRICEFARSITLERPALLGRIIARPYVGEPGNFTRTSNRRDLAISPFAPTVLDKLNEAGIDTYSVGKISDIFNGEGINHDMGHNKSNNHGVDNLIKAMTSEDFKHGFSFTNLVDFDALYGHRRNPQGYRDCLHEFDERLPEIIAAMKEDDLLMITADHGNDPTYAGTDHTREYIPFLAYSPSFKCSGLIPVGHFADISATIADNFGVEKAMIGESFLDKLV.

Mn(2+) is bound by residues Asp13, Asp298, His303, Asp339, His340, and His351.

The protein belongs to the phosphopentomutase family. Mn(2+) is required as a cofactor.

It localises to the cytoplasm. It carries out the reaction 2-deoxy-alpha-D-ribose 1-phosphate = 2-deoxy-D-ribose 5-phosphate. The enzyme catalyses alpha-D-ribose 1-phosphate = D-ribose 5-phosphate. It participates in carbohydrate degradation; 2-deoxy-D-ribose 1-phosphate degradation; D-glyceraldehyde 3-phosphate and acetaldehyde from 2-deoxy-alpha-D-ribose 1-phosphate: step 1/2. Functionally, isomerase that catalyzes the conversion of deoxy-ribose 1-phosphate (dRib-1-P) and ribose 1-phosphate (Rib-1-P) to deoxy-ribose 5-phosphate (dRib-5-P) and ribose 5-phosphate (Rib-5-P), respectively. The sequence is that of Phosphopentomutase from Streptococcus thermophilus (strain ATCC BAA-491 / LMD-9).